The following is a 90-amino-acid chain: 10.1 kDa protein (90 aa).

This Pseudomonas aeruginosa (Bacteriophage Pf1) protein is 10.1 kDa protein.